Here is a 363-residue protein sequence, read N- to C-terminus: S-adenosylmethionine:tRNA ribosyltransferase-isomerase (363 aa).

It belongs to the QueA family. Monomer.

It is found in the cytoplasm. It carries out the reaction 7-aminomethyl-7-carbaguanosine(34) in tRNA + S-adenosyl-L-methionine = epoxyqueuosine(34) in tRNA + adenine + L-methionine + 2 H(+). It functions in the pathway tRNA modification; tRNA-queuosine biosynthesis. Its function is as follows. Transfers and isomerizes the ribose moiety from AdoMet to the 7-aminomethyl group of 7-deazaguanine (preQ1-tRNA) to give epoxyqueuosine (oQ-tRNA). The polypeptide is S-adenosylmethionine:tRNA ribosyltransferase-isomerase (Haemophilus influenzae (strain 86-028NP)).